A 182-amino-acid polypeptide reads, in one-letter code: UPF0316 protein BCG9842_B1857 (182 aa).

The next 3 membrane-spanning stretches (helical) occupy residues 6-26 (LIFV…ILLV), 32-52 (SAAG…GIVF), and 58-78 (WMNI…GGYI).

This sequence belongs to the UPF0316 family.

It localises to the cell membrane. The polypeptide is UPF0316 protein BCG9842_B1857 (Bacillus cereus (strain G9842)).